Consider the following 144-residue polypeptide: Ethylene-responsive transcription factor ERF019 (144 aa).

A DNA-binding region (AP2/ERF) is located at residues 13-72 (KYKGIRRRKWGKWVSEIRVPGTRDRLWLGSFSTAEGAAVAHDVAFFCLHQPDSLESLNFP).

The protein belongs to the AP2/ERF transcription factor family. ERF subfamily.

The protein resides in the nucleus. Its function is as follows. Probably acts as a transcriptional activator. Binds to the GCC-box pathogenesis-related promoter element. May be involved in the regulation of gene expression by stress factors and by components of stress signal transduction pathways. The chain is Ethylene-responsive transcription factor ERF019 (ERF019) from Arabidopsis thaliana (Mouse-ear cress).